A 673-amino-acid polypeptide reads, in one-letter code: DNA ligase (673 aa).

34 to 38 (DAAFD) serves as a coordination point for NAD(+). A disordered region spans residues 54–73 (LRRPDSPTQRVGGATAPDFA). NAD(+)-binding positions include 83–84 (SL) and Glu114. Catalysis depends on Lys116, which acts as the N6-AMP-lysine intermediate. The NAD(+) site is built by Arg137, Glu176, Lys292, and Lys316. Residues Cys410, Cys413, Cys428, and Cys433 each contribute to the Zn(2+) site. Residues 594 to 673 (PAEGPLAGMT…DEFCERYLQG (80 aa)) form the BRCT domain.

The protein belongs to the NAD-dependent DNA ligase family. LigA subfamily. Mg(2+) is required as a cofactor. It depends on Mn(2+) as a cofactor.

It carries out the reaction NAD(+) + (deoxyribonucleotide)n-3'-hydroxyl + 5'-phospho-(deoxyribonucleotide)m = (deoxyribonucleotide)n+m + AMP + beta-nicotinamide D-nucleotide.. Functionally, DNA ligase that catalyzes the formation of phosphodiester linkages between 5'-phosphoryl and 3'-hydroxyl groups in double-stranded DNA using NAD as a coenzyme and as the energy source for the reaction. It is essential for DNA replication and repair of damaged DNA. The polypeptide is DNA ligase (Symbiobacterium thermophilum (strain DSM 24528 / JCM 14929 / IAM 14863 / T)).